The following is a 435-amino-acid chain: Virulence factor PIT1 (435 aa).

The next 5 membrane-spanning stretches (helical) occupy residues 33–53, 77–97, 111–131, 143–163, and 204–224; these read ETTT…SEVI, IFFI…ILVT, WAWT…CVIG, VASW…MWTN, and TFWF…ACCI. Asn330 carries N-linked (GlcNAc...) asparagine glycosylation. Positions 392 to 404 are enriched in polar residues; the sequence is SPQMPSKAQSQSI. The disordered stretch occupies residues 392-435; it reads SPQMPSKAQSQSIPYKREVEVTVDMSPVPPPPGPSPAPLPAPYM. Pro residues predominate over residues 418 to 435; it reads PVPPPPGPSPAPLPAPYM.

O-mannosylated by PMT4. Is also N-glycosylated.

The protein resides in the cell membrane. In terms of biological role, plasma membrane virulence factor required for spreading and inducing tumors in infected leaves. This Mycosarcoma maydis (Corn smut fungus) protein is Virulence factor PIT1.